Here is a 252-residue protein sequence, read N- to C-terminus: 3-dehydroquinate dehydratase (252 aa).

3-dehydroquinate contacts are provided by residues Ser21, 46–48 (EWR), and Arg82. Catalysis depends on His143, which acts as the Proton donor/acceptor. Catalysis depends on Lys170, which acts as the Schiff-base intermediate with substrate. 3 residues coordinate 3-dehydroquinate: Arg213, Ser232, and Gln236.

The protein belongs to the type-I 3-dehydroquinase family. In terms of assembly, dimer of dimers.

The catalysed reaction is 3-dehydroquinate = 3-dehydroshikimate + H2O. Its pathway is metabolic intermediate biosynthesis; chorismate biosynthesis; chorismate from D-erythrose 4-phosphate and phosphoenolpyruvate: step 3/7. Its activity is regulated as follows. Inhibited by (2R)-2-methyl-3-dehydroquinic acid. Functionally, involved in the third step of the chorismate pathway, which leads to the biosynthesis of aromatic amino acids. Catalyzes the cis-dehydration of 3-dehydroquinate (DHQ) and introduces the first double bond of the aromatic ring to yield 3-dehydroshikimate. The reaction involves the formation of an imine intermediate between the keto group of 3-dehydroquinate and the epsilon-amino group of Lys-170 at the active site. The polypeptide is 3-dehydroquinate dehydratase (Salmonella typhi).